We begin with the raw amino-acid sequence, 20 residues long: Putative serine protease (20 aa).

It belongs to the peptidase S1 family.

The protein resides in the secreted. Binds the A.niger cell wall component alpha-1,3-glucan, a fungal pathogen-associated molecular pattern (PAMP) that activates the host immune response. This is Putative serine protease from Galleria mellonella (Greater wax moth).